A 267-amino-acid chain; its full sequence is 4-hydroxy-tetrahydrodipicolinate reductase (267 aa).

NAD(+) is bound by residues 8-13 and glutamate 34; that span reads GAAGRM. Arginine 35 contributes to the NADP(+) binding site. Residues 98 to 100 and 122 to 125 contribute to the NAD(+) site; these read GST and APNM. Catalysis depends on histidine 155, which acts as the Proton donor/acceptor. Histidine 156 is a (S)-2,3,4,5-tetrahydrodipicolinate binding site. The Proton donor role is filled by lysine 159. Position 165–166 (165–166) interacts with (S)-2,3,4,5-tetrahydrodipicolinate; sequence GT.

It belongs to the DapB family.

The protein localises to the cytoplasm. The catalysed reaction is (S)-2,3,4,5-tetrahydrodipicolinate + NAD(+) + H2O = (2S,4S)-4-hydroxy-2,3,4,5-tetrahydrodipicolinate + NADH + H(+). It catalyses the reaction (S)-2,3,4,5-tetrahydrodipicolinate + NADP(+) + H2O = (2S,4S)-4-hydroxy-2,3,4,5-tetrahydrodipicolinate + NADPH + H(+). Its pathway is amino-acid biosynthesis; L-lysine biosynthesis via DAP pathway; (S)-tetrahydrodipicolinate from L-aspartate: step 4/4. Its function is as follows. Catalyzes the conversion of 4-hydroxy-tetrahydrodipicolinate (HTPA) to tetrahydrodipicolinate. The protein is 4-hydroxy-tetrahydrodipicolinate reductase of Geotalea uraniireducens (strain Rf4) (Geobacter uraniireducens).